A 273-amino-acid polypeptide reads, in one-letter code: Large ribosomal subunit protein uL2 (273 aa).

The disordered stretch occupies residues 221 to 273 (RGTAMNPVDHPHGGGEGRNFGKHPVTPWGIQTKGKKTRSNKRTDKFIVRRRSK).

Belongs to the universal ribosomal protein uL2 family. Part of the 50S ribosomal subunit. Forms a bridge to the 30S subunit in the 70S ribosome.

Functionally, one of the primary rRNA binding proteins. Required for association of the 30S and 50S subunits to form the 70S ribosome, for tRNA binding and peptide bond formation. It has been suggested to have peptidyltransferase activity; this is somewhat controversial. Makes several contacts with the 16S rRNA in the 70S ribosome. The sequence is that of Large ribosomal subunit protein uL2 from Sodalis glossinidius (strain morsitans).